Reading from the N-terminus, the 562-residue chain is Formate--tetrahydrofolate ligase (562 aa).

ATP is bound at residue 77 to 84 (TPAGEGKS).

This sequence belongs to the formate--tetrahydrofolate ligase family.

It carries out the reaction (6S)-5,6,7,8-tetrahydrofolate + formate + ATP = (6R)-10-formyltetrahydrofolate + ADP + phosphate. The protein operates within one-carbon metabolism; tetrahydrofolate interconversion. In Corynebacterium jeikeium (strain K411), this protein is Formate--tetrahydrofolate ligase.